A 269-amino-acid chain; its full sequence is Putative pyruvate, phosphate dikinase regulatory protein (269 aa).

147–154 contacts ADP; sequence GVSRSSKT.

It belongs to the pyruvate, phosphate/water dikinase regulatory protein family. PDRP subfamily.

It catalyses the reaction N(tele)-phospho-L-histidyl/L-threonyl-[pyruvate, phosphate dikinase] + ADP = N(tele)-phospho-L-histidyl/O-phospho-L-threonyl-[pyruvate, phosphate dikinase] + AMP + H(+). It carries out the reaction N(tele)-phospho-L-histidyl/O-phospho-L-threonyl-[pyruvate, phosphate dikinase] + phosphate + H(+) = N(tele)-phospho-L-histidyl/L-threonyl-[pyruvate, phosphate dikinase] + diphosphate. Functionally, bifunctional serine/threonine kinase and phosphorylase involved in the regulation of the pyruvate, phosphate dikinase (PPDK) by catalyzing its phosphorylation/dephosphorylation. In Trichlorobacter lovleyi (strain ATCC BAA-1151 / DSM 17278 / SZ) (Geobacter lovleyi), this protein is Putative pyruvate, phosphate dikinase regulatory protein.